The primary structure comprises 95 residues: Aspartyl/glutamyl-tRNA(Asn/Gln) amidotransferase subunit C (95 aa).

This sequence belongs to the GatC family. In terms of assembly, heterotrimer of A, B and C subunits.

The enzyme catalyses L-glutamyl-tRNA(Gln) + L-glutamine + ATP + H2O = L-glutaminyl-tRNA(Gln) + L-glutamate + ADP + phosphate + H(+). The catalysed reaction is L-aspartyl-tRNA(Asn) + L-glutamine + ATP + H2O = L-asparaginyl-tRNA(Asn) + L-glutamate + ADP + phosphate + 2 H(+). In terms of biological role, allows the formation of correctly charged Asn-tRNA(Asn) or Gln-tRNA(Gln) through the transamidation of misacylated Asp-tRNA(Asn) or Glu-tRNA(Gln) in organisms which lack either or both of asparaginyl-tRNA or glutaminyl-tRNA synthetases. The reaction takes place in the presence of glutamine and ATP through an activated phospho-Asp-tRNA(Asn) or phospho-Glu-tRNA(Gln). This Acidiphilium cryptum (strain JF-5) protein is Aspartyl/glutamyl-tRNA(Asn/Gln) amidotransferase subunit C.